A 103-amino-acid polypeptide reads, in one-letter code: Large ribosomal subunit protein bL21 (103 aa).

It belongs to the bacterial ribosomal protein bL21 family. In terms of assembly, part of the 50S ribosomal subunit. Contacts protein L20.

Functionally, this protein binds to 23S rRNA in the presence of protein L20. The sequence is that of Large ribosomal subunit protein bL21 from Aromatoleum aromaticum (strain DSM 19018 / LMG 30748 / EbN1) (Azoarcus sp. (strain EbN1)).